Consider the following 187-residue polypeptide: Ribosome-recycling factor (187 aa).

Belongs to the RRF family.

It is found in the cytoplasm. Responsible for the release of ribosomes from messenger RNA at the termination of protein biosynthesis. May increase the efficiency of translation by recycling ribosomes from one round of translation to another. The protein is Ribosome-recycling factor of Flavobacterium johnsoniae (strain ATCC 17061 / DSM 2064 / JCM 8514 / BCRC 14874 / CCUG 350202 / NBRC 14942 / NCIMB 11054 / UW101) (Cytophaga johnsonae).